Consider the following 631-residue polypeptide: Fusexin 1 (631 aa).

The signal sequence occupies residues methionine 1–alanine 19. The interval threonine 20 to serine 90 is domain I N-terminus. Topologically, residues threonine 20–aspartate 537 are extracellular. The interval threonine 91–asparagine 170 is domain II N-terminus. 4 residues coordinate Ca(2+): aspartate 112, serine 146, tyrosine 149, and aspartate 150. Cysteines 125 and 155 form a disulfide. The segment at serine 143–valine 148 is fusion loop, required for fusogenic activity, not required for membrane surface localization. Positions proline 171 to proline 224 are domain I central section. Positions glutamate 225–phenylalanine 316 are domain II C-terminus. The domain I C-terminus stretch occupies residues valine 317–glycine 348. The segment at aspartate 349–serine 455 is domain III. Cystine bridges form between cysteine 389/cysteine 432, cysteine 457/cysteine 477, and cysteine 490/cysteine 506. The disordered stretch occupies residues aspartate 443–asparagine 467. Residues glutamate 456–glutamine 509 form a domain IV, required for fusogenic activity region. Residues aspartate 510 to aspartate 537 form a stem region. Residues leucine 538–glycine 558 form a helical membrane-spanning segment. Residues tyrosine 559–proline 590 lie on the Cytoplasmic side of the membrane. The helical transmembrane segment at valine 591–phenylalanine 611 threads the bilayer. Residue histidine 612 is a topological domain, extracellular. A helical membrane pass occupies residues proline 613–phenylalanine 630. A topological domain (cytoplasmic) is located at residue arginine 631.

It belongs to the HAP2/GCS1 family. Fusexin 1 subfamily. In terms of assembly, monomer in solution, crystallizes as a trimer in high salt (2.5 M NaCl, 0.2 M CaCl(2)). The trimer is stabilized by interdomain contacts and numerous Ca(2+) and Na(+) ions.

The protein localises to the cell surface. It localises to the cell membrane. Functionally, exhibits fusogenic activity. Mediates cell-cell fusion in mammalian cells when present in both cells (bilateral fusion). This chain is Fusexin 1, found in Uncultured archaeon.